The chain runs to 185 residues: Guanylate kinase (185 aa).

Residues 3–181 form the Guanylate kinase-like domain; sequence TRMIIVAAPS…SYGEFKKIVE (179 aa). 10 to 17 is a binding site for ATP; sequence APSGAGKS.

The protein belongs to the guanylate kinase family.

The protein resides in the cytoplasm. The enzyme catalyses GMP + ATP = GDP + ADP. In terms of biological role, essential for recycling GMP and indirectly, cGMP. This is Guanylate kinase from Bdellovibrio bacteriovorus (strain ATCC 15356 / DSM 50701 / NCIMB 9529 / HD100).